The chain runs to 76 residues: MTKETQSFEEMMQELERIVQKLDNETVSLEESLDLYQRGMKLSAACDTTLKNAEKKVNDLIKEEAEDVKNDESTDE.

This sequence belongs to the XseB family. In terms of assembly, heterooligomer composed of large and small subunits.

The protein localises to the cytoplasm. The catalysed reaction is Exonucleolytic cleavage in either 5'- to 3'- or 3'- to 5'-direction to yield nucleoside 5'-phosphates.. In terms of biological role, bidirectionally degrades single-stranded DNA into large acid-insoluble oligonucleotides, which are then degraded further into small acid-soluble oligonucleotides. The protein is Exodeoxyribonuclease 7 small subunit of Staphylococcus aureus (strain MRSA252).